Reading from the N-terminus, the 79-residue chain is Acyl carrier protein (79 aa).

In terms of domain architecture, Carrier spans 2–77 (SEIGERVKKI…DAVKFLEKNA (76 aa)). Residue serine 37 is modified to O-(pantetheine 4'-phosphoryl)serine.

It belongs to the acyl carrier protein (ACP) family. In terms of processing, 4'-phosphopantetheine is transferred from CoA to a specific serine of apo-ACP by AcpS. This modification is essential for activity because fatty acids are bound in thioester linkage to the sulfhydryl of the prosthetic group.

The protein localises to the cytoplasm. It functions in the pathway lipid metabolism; fatty acid biosynthesis. Carrier of the growing fatty acid chain in fatty acid biosynthesis. This chain is Acyl carrier protein, found in Rhodopseudomonas palustris (strain BisA53).